A 399-amino-acid chain; its full sequence is Succinate--CoA ligase [ADP-forming] subunit beta (399 aa).

An ATP-grasp domain is found at 9–254; the sequence is KAVLAEFGVA…ESEEDPKEIE (246 aa). ATP is bound by residues Lys-46, 53–55, Glu-109, Ala-112, and Glu-117; that span reads GRG. Mg(2+) is bound by residues Asn-209 and Asp-223. Substrate contacts are provided by residues Asn-274 and 331 to 333; that span reads GIM.

The protein belongs to the succinate/malate CoA ligase beta subunit family. In terms of assembly, heterotetramer of two alpha and two beta subunits. Mg(2+) is required as a cofactor.

It catalyses the reaction succinate + ATP + CoA = succinyl-CoA + ADP + phosphate. It carries out the reaction GTP + succinate + CoA = succinyl-CoA + GDP + phosphate. It participates in carbohydrate metabolism; tricarboxylic acid cycle; succinate from succinyl-CoA (ligase route): step 1/1. Succinyl-CoA synthetase functions in the citric acid cycle (TCA), coupling the hydrolysis of succinyl-CoA to the synthesis of either ATP or GTP and thus represents the only step of substrate-level phosphorylation in the TCA. The beta subunit provides nucleotide specificity of the enzyme and binds the substrate succinate, while the binding sites for coenzyme A and phosphate are found in the alpha subunit. This is Succinate--CoA ligase [ADP-forming] subunit beta from Phenylobacterium zucineum (strain HLK1).